A 469-amino-acid chain; its full sequence is Probable Xaa-Pro aminopeptidase PEPP (469 aa).

Residues D264, D275, E398, and E438 each coordinate Mn(2+).

Belongs to the peptidase M24B family. The cofactor is Mn(2+).

The enzyme catalyses Release of any N-terminal amino acid, including proline, that is linked to proline, even from a dipeptide or tripeptide.. Functionally, catalyzes the removal of a penultimate prolyl residue from the N-termini of peptides. This Ajellomyces capsulatus (strain H143) (Darling's disease fungus) protein is Probable Xaa-Pro aminopeptidase PEPP (PEPP).